The primary structure comprises 187 residues: Elongation factor P (187 aa).

Lysine 34 carries the post-translational modification N6-(3,6-diaminohexanoyl)-5-hydroxylysine.

This sequence belongs to the elongation factor P family. May be beta-lysylated on the epsilon-amino group of Lys-34 by the combined action of EpmA and EpmB, and then hydroxylated on the C5 position of the same residue by EpmC (if this protein is present). Lysylation is critical for the stimulatory effect of EF-P on peptide-bond formation. The lysylation moiety may extend toward the peptidyltransferase center and stabilize the terminal 3-CCA end of the tRNA. Hydroxylation of the C5 position on Lys-34 may allow additional potential stabilizing hydrogen-bond interactions with the P-tRNA.

It is found in the cytoplasm. The protein operates within protein biosynthesis; polypeptide chain elongation. Functionally, involved in peptide bond synthesis. Alleviates ribosome stalling that occurs when 3 or more consecutive Pro residues or the sequence PPG is present in a protein, possibly by augmenting the peptidyl transferase activity of the ribosome. Modification of Lys-34 is required for alleviation. The protein is Elongation factor P of Vesicomyosocius okutanii subsp. Calyptogena okutanii (strain HA).